The primary structure comprises 92 residues: UPF0473 protein OB2006 (92 aa).

This sequence belongs to the UPF0473 family.

The protein is UPF0473 protein OB2006 of Oceanobacillus iheyensis (strain DSM 14371 / CIP 107618 / JCM 11309 / KCTC 3954 / HTE831).